The chain runs to 538 residues: Bifunctional purine biosynthesis protein PurH (538 aa).

Residues 8–158 form the MGS-like domain; the sequence is IPAPDKVEIK…KNHAYVTILT (151 aa).

The protein belongs to the PurH family.

It carries out the reaction (6R)-10-formyltetrahydrofolate + 5-amino-1-(5-phospho-beta-D-ribosyl)imidazole-4-carboxamide = 5-formamido-1-(5-phospho-D-ribosyl)imidazole-4-carboxamide + (6S)-5,6,7,8-tetrahydrofolate. It catalyses the reaction IMP + H2O = 5-formamido-1-(5-phospho-D-ribosyl)imidazole-4-carboxamide. It participates in purine metabolism; IMP biosynthesis via de novo pathway; 5-formamido-1-(5-phospho-D-ribosyl)imidazole-4-carboxamide from 5-amino-1-(5-phospho-D-ribosyl)imidazole-4-carboxamide (10-formyl THF route): step 1/1. Its pathway is purine metabolism; IMP biosynthesis via de novo pathway; IMP from 5-formamido-1-(5-phospho-D-ribosyl)imidazole-4-carboxamide: step 1/1. This chain is Bifunctional purine biosynthesis protein PurH, found in Rhizobium leguminosarum bv. trifolii (strain WSM2304).